The following is a 385-amino-acid chain: Probable alpha-galactosidase (385 aa).

The first 19 residues, Met-1–Ala-19, serve as a signal peptide directing secretion. Intrachain disulfides connect Cys-40–Cys-72 and Cys-119–Cys-149. Asp-147 acts as the Nucleophile in catalysis. Substrate is bound at residue Asp-180–Glu-184. The Proton donor role is filled by Asp-202.

It belongs to the glycosyl hydrolase 27 family.

The catalysed reaction is Hydrolysis of terminal, non-reducing alpha-D-galactose residues in alpha-D-galactosides, including galactose oligosaccharides, galactomannans and galactolipids.. This is Probable alpha-galactosidase (melA) from Dictyostelium discoideum (Social amoeba).